The sequence spans 151 residues: Ribosome maturation factor RimP (151 aa).

The protein belongs to the RimP family.

It is found in the cytoplasm. Functionally, required for maturation of 30S ribosomal subunits. The polypeptide is Ribosome maturation factor RimP (Desulfotalea psychrophila (strain LSv54 / DSM 12343)).